A 309-amino-acid polypeptide reads, in one-letter code: MPIRVPDELPAVNFLRNENVFVMTSTRASTQMIRPLKVLVLNLMPKKIETENQFLRLLSNSPLQIDIQLLRIDTRESRNTPSEHLNNFYRNFEDIQHDNYDGLIVTGAPLGLVDFCDVAYWPQIHKVLHWAKEHVTSTLFVCWAVQAALNILYGIPKQTRDSKLSGVFDHQILHPHALLTRGFDDTFLAPHSRYADFPAGLIRDYTDLEIFAESEQTGAYLFASKDKRLAFVTGHPEYDALTLSGEYHRDYEAGLNPEIPFNYFPQDNPQLEPRASWRSHGNLLFSNWLNYYVYQITPFDLRHMNPTLD.

Residue cysteine 142 is the Acyl-thioester intermediate of the active site. 2 residues coordinate substrate: lysine 163 and serine 192. Catalysis depends on histidine 235, which acts as the Proton acceptor. Glutamate 237 is a catalytic residue. Substrate is bound at residue arginine 249.

This sequence belongs to the MetA family.

It localises to the cytoplasm. It catalyses the reaction L-homoserine + succinyl-CoA = O-succinyl-L-homoserine + CoA. It functions in the pathway amino-acid biosynthesis; L-methionine biosynthesis via de novo pathway; O-succinyl-L-homoserine from L-homoserine: step 1/1. Its function is as follows. Transfers a succinyl group from succinyl-CoA to L-homoserine, forming succinyl-L-homoserine. This Erwinia tasmaniensis (strain DSM 17950 / CFBP 7177 / CIP 109463 / NCPPB 4357 / Et1/99) protein is Homoserine O-succinyltransferase.